Reading from the N-terminus, the 330-residue chain is DNA repair and recombination protein RadA (330 aa).

Position 124–131 (Gly-124–Thr-131) interacts with ATP.

It belongs to the eukaryotic RecA-like protein family.

Functionally, involved in DNA repair and in homologous recombination. Binds and assemble on single-stranded DNA to form a nucleoprotein filament. Hydrolyzes ATP in a ssDNA-dependent manner and promotes DNA strand exchange between homologous DNA molecules. This is DNA repair and recombination protein RadA from Pyrobaculum neutrophilum (strain DSM 2338 / JCM 9278 / NBRC 100436 / V24Sta) (Thermoproteus neutrophilus).